A 114-amino-acid polypeptide reads, in one-letter code: UPF0145 protein YG5714_0873 (114 aa).

This sequence belongs to the UPF0145 family.

This chain is UPF0145 protein YG5714_0873, found in Saccharolobus islandicus (strain Y.G.57.14 / Yellowstone #1) (Sulfolobus islandicus).